The chain runs to 504 residues: Diacylglycerol O-acyltransferase 1B (504 aa).

Positions 1–72 (MAISDEPESV…VNSQQQNEKQ (72 aa)) are disordered. Polar residues predominate over residues 24–41 (SATSTAGLFNSPETTTDS). Low complexity predominate over residues 53–65 (DDSINSDDAAVNS). 7 consecutive transmembrane segments (helical) span residues 108 to 128 (HAGL…RLII), 152 to 172 (WPLF…FIVE), 184 to 204 (VVVV…VLVI), 209 to 229 (SAFV…LKLV), 259 to 279 (YPYN…TLCY), 301 to 321 (LIIF…PIVQ), and 348 to 368 (VWLC…AELL). The FYXDWWN motif motif lies at 375 to 381 (FYKDWWN). 3 helical membrane passes run 416 to 436 (AAAL…CIAV), 438 to 458 (CHIF…LVLI), and 471 to 491 (VGNM…CVLL). Histidine 430 is a catalytic residue.

Belongs to the membrane-bound acyltransferase family. Sterol o-acyltransferase subfamily. As to expression, highly expressed in flowers and pods. Expressed at low levels in roots, stems and leaves.

It is found in the endoplasmic reticulum membrane. The enzyme catalyses an acyl-CoA + a 1,2-diacyl-sn-glycerol = a triacyl-sn-glycerol + CoA. It functions in the pathway glycerolipid metabolism; triacylglycerol biosynthesis. Its function is as follows. Major contributors to triacylglycerol (TAG) synthesis and oil accumulation in developing seeds. Catalyzes the acylation of the sn-3 hydroxy group of sn-1,2-diacylglycerol using acyl-CoA. Has a marked preference for oleoyl-CoA and sn-1,2-dioleoylglycerol over vernoloyl-CoA and sn-1,2-divernoloylglycerol. This chain is Diacylglycerol O-acyltransferase 1B, found in Glycine max (Soybean).